We begin with the raw amino-acid sequence, 184 residues long: CKLF-like MARVEL transmembrane domain-containing protein 3 (184 aa).

Positions 1 to 12 are enriched in acidic residues; that stretch reads MWPPDAEPEPDP. The tract at residues 1-22 is disordered; sequence MWPPDAEPEPDPESAHGPRSGR. The region spanning 36 to 155 is the MARVEL domain; that stretch reads FLCSLKGRLL…DFYLIFNEVA (120 aa). 3 consecutive transmembrane segments (helical) span residues 64–84, 96–116, and 131–151; these read ASAFLTVPLLEFLLAVYFLFA, LCWPMMDFLRCVTAALIYFVI, and AAGVFGFFATIVFAIDFYLIF. Residues 163–184 are disordered; the sequence is SGNETTAHRTEEENSNSDSDSD. The span at 175-184 shows a compositional bias: acidic residues; sequence ENSNSDSDSD.

Belongs to the chemokine-like factor family.

It is found in the membrane. This Mus musculus (Mouse) protein is CKLF-like MARVEL transmembrane domain-containing protein 3 (Cmtm3).